A 505-amino-acid chain; its full sequence is MIEPSMERENGALTAATTTTTAVTSPPPMASSPRQALVERLKDYGQEDIFSLWDELSPDEKDFLVRDIENLDLPRIDRIIRCSLHSQGLPVAAIEPVPENWVSTVDGRTMEDREKWWKMGLKTIYEGKLGVVLLSGGQGTRLGSSDPKGCFNIGLPSGKSLFQIQAERILCVQRLAAQVVSEGPIRPVTIHWYIMTSPFTDEATRKYFSSHKYFGLEPDQISFFQQGTLPCVTKDGKFIMETPFSLAKAPDGNGGVYAALKCSRLLEDMASRGIKYVDCYGVDNVLVRVADPTFLGYFIDKGAASAAKVVRKAYPQEQVGVFVRRGKGGPLTVVEYSELDQSMASAINQRTGRLQYCWSNVCLHMFTLDFLNQVATGLEKDSVYHLAEKKIPSMNGYTMGLKLEQFIFDSFPYAPSTALFEVLREEEFAPVKNVNGSNFDTPESARLLVLRLHTRWVIAAGGFLTHSVPLYATGVEVSPLCSYAGENLEAICRGRTFHAPCEISL.

The span at 1-10 (MIEPSMEREN) shows a compositional bias: basic and acidic residues. The segment at 1–32 (MIEPSMERENGALTAATTTTTAVTSPPPMASS) is disordered. Positions 14–24 (TAATTTTTAVT) are enriched in low complexity. The Substrate binding motif lies at 134–137 (LSGG). Asparagine 253 provides a ligand contact to substrate. The Substrate binding signature appears at 335–336 (EY). Lysine 432 is a binding site for substrate.

Belongs to the UDPGP type 1 family. Monomer. Mg(2+) serves as cofactor. Mn(2+) is required as a cofactor. Expressed in root tips, stipules and mature pollen grains.

It carries out the reaction N-acetyl-alpha-D-glucosamine 1-phosphate + UTP + H(+) = UDP-N-acetyl-alpha-D-glucosamine + diphosphate. The enzyme catalyses N-acetyl-alpha-D-galactosamine 1-phosphate + UTP + H(+) = UDP-N-acetyl-alpha-D-galactosamine + diphosphate. It functions in the pathway nucleotide-sugar biosynthesis; UDP-N-acetyl-alpha-D-glucosamine biosynthesis; UDP-N-acetyl-alpha-D-glucosamine from N-acetyl-alpha-D-glucosamine 1-phosphate: step 1/1. Its activity is regulated as follows. Inhibited by hygromycin and streptomycin, but not by gentamycin or kanamycin. Its function is as follows. Uridylyltransferase involved in the biosynthesis of UDP-glucosamine, an essential precursor for glycoprotein and glycolipid synthesis. Can use both UDP-glucosamine and the 4-epimer UDP-galactosamine as substrates, but no other sugars or NTPs. Acts redundantly with GLCNAC1PUT2. Required for gametogenesis and embryo development. In Arabidopsis thaliana (Mouse-ear cress), this protein is UDP-N-acetylglucosamine diphosphorylase 1 (GLCNAC1PUT1).